A 420-amino-acid chain; its full sequence is D-tagatose-1,6-bisphosphate aldolase subunit GatZ (420 aa).

This sequence belongs to the GatZ/KbaZ family. GatZ subfamily. As to quaternary structure, forms a complex with GatY.

The protein operates within carbohydrate metabolism; D-tagatose 6-phosphate degradation; D-glyceraldehyde 3-phosphate and glycerone phosphate from D-tagatose 6-phosphate: step 2/2. Functionally, component of the tagatose-1,6-bisphosphate aldolase GatYZ that is required for full activity and stability of the Y subunit. Could have a chaperone-like function for the proper and stable folding of GatY. When expressed alone, GatZ does not show any aldolase activity. Is involved in the catabolism of galactitol. In Escherichia coli O9:H4 (strain HS), this protein is D-tagatose-1,6-bisphosphate aldolase subunit GatZ.